A 638-amino-acid polypeptide reads, in one-letter code: 9-cis-epoxycarotenoid dioxygenase NCED1, chloroplastic (638 aa).

A chloroplast-targeting transit peptide spans 1-80 (MQRICPAHCS…QTEQEDEQLV (80 aa)). Low complexity-rich tracts occupy residues 28–37 (AASAAPQSPS), 44–69 (ASAAPPSAAASTTVLTSPLVTTTRTP), and 92–102 (TTNGRAAPSQS). Disordered regions lie at residues 28-80 (AASA…EQLV) and 92-113 (TTNGRAAPSQSRPRRRPAPAAA). Fe cation is bound by residues His331, His380, His446, and His624.

This sequence belongs to the carotenoid oxygenase family. Requires Fe(2+) as cofactor.

The protein localises to the plastid. Its subcellular location is the chloroplast. It carries out the reaction a 9-cis-epoxycarotenoid + O2 = a 12'-apo-carotenal + 2-cis,4-trans-xanthoxin. The enzyme catalyses 9-cis-violaxanthin + O2 = (3S,5R,6S)-5,6-epoxy-3-hydroxy-5,6-dihydro-12'-apo-beta-caroten-12'-al + 2-cis,4-trans-xanthoxin. It catalyses the reaction 9'-cis-neoxanthin + O2 = (3S,5R,6R)-3,5-dihydroxy-6,7-didehydro-5,6-dihydro-12'-apo-beta-caroten-12'-al + 2-cis,4-trans-xanthoxin. Its function is as follows. Has a 11,12(11',12') 9-cis epoxycarotenoid cleavage activity. Catalyzes the first step of abscisic-acid biosynthesis from carotenoids. In Oryza sativa subsp. japonica (Rice), this protein is 9-cis-epoxycarotenoid dioxygenase NCED1, chloroplastic.